Consider the following 1075-residue polypeptide: MDNKRLYNGNLSNIPEVIDPGITIPIYEEDIRNDTRMNTNARSVRVSDKRGRSSSTSPQKIGSYRTRAGRFSDTLTNLLPSISAKLHHSKKSTPVVVVPPTSSTPDSLNSTTYAPRVSSDSFTVATPLSLQSTTTRTRTRNNTVSSQITASSSLTTDVGNATSANIWSANAESNTSSSPLFDYPLATSYFEPLTRFKSTDNYTLPQTAQLNSFLEKNGNPNIWSSAGNSNTDHLNTPIVNRQRSQSQSTTNRVYTDAPYYQQPAQNYQVQVPPRVPKSTSISPVILDDVDPASINWITANQKVPLVNQISALLPTNTISISNVFPLQPTQQHQQNAVNLTSTSLATLCSQYGKVLSARTLRGLNMALVEFSTVESAICALEALQGKELSKVGAPSTVSFARVLPMYEQPLNVNGFNNTPKQPLLQEQLNHGVLNYQLQQSLQQPELQQQPTSFNQPNLTYCNPTQNLSHLQLSSNENEPYPFPLPPPSLSDSKKDILHTISSFKLEYDHLELNHLLQNALKNKGVSDTNYFGPLPEHNSKVPKRKDTFDAPKLRELRKQFDSNSLSTIEMEQLAIVMLDQLPELSSDYLGNTVIQKLFENSSNIIRDIMLRKCNKYLTSMGVHKNGTWVCQKIIKMANTPRQINLVTSGVSDYCTPLFNDQFGNYVIQGILKFGFPWNSFIFESVLSHFWTIVQNRYGSRAVRACLEADSIITQCQLLTITSLIIVLSPYLATDTNGTLLITWLLDTCTLPNKNLILCDKLVNKNLVKLCCHKLGSLTVLKILNLRGGEEEALSKNKIIHAIFDGPISSDSILFQILDEGNYGPTFIYKVLTSRILDNSVRDEAITKIRQLILNSNINLQSRQLLEEVGLSSAGISPKQSSKNHRKQHPQGFHSPGRARGVSVSSVRSSNSRHNSVIQMNNAGPTPALNFNPAPMSEINSYFNNQQVVYSGNQNQNQNGNSNGLDELNSQFDSFRIANGTNLSLPIVNLPNVSNNNNNYNNSGYSSQMNPLSRSVSHNNNNNTNNYNNNDNDNNNNNNNNNNNNNNNNNNNNNSNNSNNNNNNDTSLYRYRSYGY.

A disordered region spans residues 38–68 (NTNARSVRVSDKRGRSSSTSPQKIGSYRTRA). S72 carries the post-translational modification Phosphoserine. Low complexity predominate over residues 93–105 (TPVVVVPPTSSTP). A disordered region spans residues 93–112 (TPVVVVPPTSSTPDSLNSTT). S198 bears the Phosphoserine mark. The RRM domain maps to 316–402 (NTISISNVFP…APSTVSFARV (87 aa)). In terms of domain architecture, PUM-HD spans 511-872 (ELNHLLQNAL…QLLEEVGLSS (362 aa)). Pumilio repeat units follow at residues 574–611 (AIVMLDQLPELSSDYLGNTVIQKLFENSSNIIRDIMLR), 612–647 (KCNKYLTSMGVHKNGTWVCQKIIKMANTPRQINLVT), 649–683 (GVSDYCTPLFNDQFGNYVIQGILKFGFPWNSFIFE), 684–719 (SVLSHFWTIVQNRYGSRAVRACLEADSIITQCQLLT), 722–758 (SLIIVLSPYLATDTNGTLLITWLLDTCTLPNKNLILC), and 760–800 (KLVN…KIIH). S872 and S876 each carry phosphoserine. Disordered regions lie at residues 874 to 931 (GISP…LNFN) and 997 to 1075 (NNYN…SYGY). Composition is skewed to low complexity over residues 901 to 916 (VSVSSVRSSNSRHNSV), 997 to 1009 (NNYNNSGYSSQMN), and 1018 to 1063 (NNNN…NNNN).

The protein localises to the cytoplasm. Its function is as follows. RNA-binding protein involved in post-transcriptional regulation. Negatively regulates expression of COX17 by binding to the 3'-UTR of COX17 mRNA. Promotes decay of COX17 mRNA by enhancing its rate of deadenylation and subsequent turnover. Predominantly binds to mRNAs encoding membrane-associated proteins with roles in transmembrane transport and vesicular trafficking. This is mRNA-binding protein PUF2 (PUF2) from Saccharomyces cerevisiae (strain ATCC 204508 / S288c) (Baker's yeast).